A 148-amino-acid polypeptide reads, in one-letter code: Deoxyuridine 5'-triphosphate nucleotidohydrolase (148 aa).

Substrate-binding positions include 67–69, asparagine 80, 84–86, and methionine 94; these read RSG and LID.

The protein belongs to the dUTPase family. Mg(2+) serves as cofactor.

The catalysed reaction is dUTP + H2O = dUMP + diphosphate + H(+). It functions in the pathway pyrimidine metabolism; dUMP biosynthesis; dUMP from dCTP (dUTP route): step 2/2. This enzyme is involved in nucleotide metabolism: it produces dUMP, the immediate precursor of thymidine nucleotides and it decreases the intracellular concentration of dUTP so that uracil cannot be incorporated into DNA. The chain is Deoxyuridine 5'-triphosphate nucleotidohydrolase from Francisella tularensis subsp. tularensis (strain FSC 198).